Reading from the N-terminus, the 985-residue chain is Pro-apoptotic serine protease NMA111 (985 aa).

The tract at residues 79–269 (VVSIHFSQVA…LPLDRVVRAL (191 aa)) is serine protease. Catalysis depends on charge relay system residues histidine 117, aspartate 148, and serine 231. PDZ domains follow at residues 287–385 (WVLK…TVGD) and 771–847 (PEEW…VRDA).

It belongs to the peptidase S1C family.

Its subcellular location is the nucleus. Its function is as follows. Nuclear serine protease which mediates apoptosis. The polypeptide is Pro-apoptotic serine protease NMA111 (NMA111) (Kluyveromyces lactis (strain ATCC 8585 / CBS 2359 / DSM 70799 / NBRC 1267 / NRRL Y-1140 / WM37) (Yeast)).